We begin with the raw amino-acid sequence, 558 residues long: Polypeptide N-acetylgalactosaminyltransferase 16 (558 aa).

Over 1–6 the chain is Cytoplasmic; sequence MRKIRA. A helical; Signal-anchor for type II membrane protein transmembrane segment spans residues 7-26; sequence NAIAILTVAWILGTFYYLWQ. The Lumenal portion of the chain corresponds to 27 to 558; the sequence is DNRAHAASSS…AQQWQLLPHT (532 aa). Low complexity predominate over residues 34 to 46; it reads SSSGRGAQRAGGR. The disordered stretch occupies residues 34–53; the sequence is SSSGRGAQRAGGRPEQLRED. Intrachain disulfides connect Cys-113–Cys-340, Cys-331–Cys-409, Cys-441–Cys-460, Cys-486–Cys-506, and Cys-530–Cys-543. Residues 122 to 227 form a catalytic subdomain A region; sequence LPATSVIITF…VEWLQPMLQR (106 aa). Substrate contacts are provided by Asp-163 and Arg-188. Asp-211 is a Mn(2+) binding site. Ser-212 is a substrate binding site. Mn(2+) is bound at residue His-213. Residues 286–348 form a catalytic subdomain B region; the sequence is PIRTPVIAGG…PCSRVGHVFR (63 aa). Trp-317 serves as a coordination point for substrate. His-345 serves as a coordination point for Mn(2+). Residues Arg-348, His-351, and Tyr-353 each coordinate substrate. Residues 428 to 555 enclose the Ricin B-type lectin domain; sequence KEVLPGVIKQ…DAQAQQWQLL (128 aa).

The protein belongs to the glycosyltransferase 2 family. GalNAc-T subfamily. Mn(2+) serves as cofactor. In terms of tissue distribution, in the CNS, it is predominantly expressed in several distinct hypothalamic, thalamic and amygdaloid nuclei. The most abundant level of expression is in the paraventricular, ventromedial and arcuate nuclei of the hypothalamus, the anterodorsal and parafascicular nuclei of the thalamus and the central, basomedial and medial nuclei of the amygdala. Also expressed in cerebral cortex, lateral septum, habenula and hippocampus.

It is found in the golgi apparatus membrane. The catalysed reaction is L-seryl-[protein] + UDP-N-acetyl-alpha-D-galactosamine = a 3-O-[N-acetyl-alpha-D-galactosaminyl]-L-seryl-[protein] + UDP + H(+). It catalyses the reaction L-threonyl-[protein] + UDP-N-acetyl-alpha-D-galactosamine = a 3-O-[N-acetyl-alpha-D-galactosaminyl]-L-threonyl-[protein] + UDP + H(+). It participates in protein modification; protein glycosylation. Its function is as follows. Catalyzes the initial reaction in O-linked oligosaccharide biosynthesis, the transfer of an N-acetyl-D-galactosamine residue to a serine or threonine residue on the protein receptor. This chain is Polypeptide N-acetylgalactosaminyltransferase 16 (Galnt16), found in Mus musculus (Mouse).